The following is a 1085-amino-acid chain: Extracellular calcium-sensing receptor (1085 aa).

An N-terminal signal peptide occupies residues 1–19 (MALYSCCWILLAFSTWCTS). The Extracellular portion of the chain corresponds to 20-611 (AYGPDQRAQK…KEIEFLSWTE (592 aa)). A ligand-binding 1 (LB1) region spans residues 23–189 (PDQRAQKKGD…QFKSFLRTIP (167 aa)). The cysteines at positions 61 and 102 are disulfide-linked. Phosphate is bound at residue 67–71 (RGFRW). Ile82, Ser85, Leu88, and Leu89 together coordinate Ca(2+). N-linked (GlcNAc...) asparagine glycosylation occurs at Asn91. Thr101 is a Ca(2+) binding site. An N-linked (GlcNAc...) asparagine glycan is attached at Asn131. Thr146 contacts Ca(2+). Positions 148, 169, and 171 each coordinate L-tryptophan. Residues Ser171, Pro189, Asp191, Glu232, and Asp235 each coordinate Ca(2+). A ligand-binding 2 (LB2) region spans residues 190 to 325 (NDEHQATAMA…GGTIGFGLKA (136 aa)). Disulfide bonds link Cys237–Cys562, Cys359–Cys396, Cys438–Cys450, Cys543–Cys563, Cys547–Cys566, Cys569–Cys583, and Cys586–Cys599. The spermine site is built by Asp239 and Ser241. Asn262 and Asn288 each carry an N-linked (GlcNAc...) asparagine glycan. Glu298 contributes to the Ca(2+) binding site. Glu298 is a binding site for L-tryptophan. An N-linked (GlcNAc...) asparagine glycan is attached at Asn401. Residue 416–418 (RIS) participates in phosphate binding. N-linked (GlcNAc...) asparagine glycosylation is found at Asn447, Asn469, and Asn489. Residue Tyr490 participates in Ca(2+) binding. The N-linked (GlcNAc...) asparagine glycan is linked to Asn542. The interval 543–613 (CSRDCLAGTR…IEFLSWTEPF (71 aa)) is cysteine-rich (CR). Gly558 is a binding site for Ca(2+). The N-linked (GlcNAc...) asparagine glycan is linked to Asn595. Residues 612-637 (PFGIALTLFAVLGIFLTAFVLGVFIK) traverse the membrane as a helical segment. Over 638-649 (FRNTPIVKATNR) the chain is Cytoplasmic. The segment at 638–649 (FRNTPIVKATNR) is intracellular loop 1 (ICL1). Residues 650–669 (ELSYLLLFSLLCCFSSSLFF) form a helical membrane-spanning segment. Residues 670-675 (IGEPQD) are Extracellular-facing. A helical transmembrane segment spans residues 676 to 699 (WTCRLRQPAFGISFVLCISCILVK). Residues 700–723 (TNRVLLVFEAKIPTSFHRKWWGLN) lie on the Cytoplasmic side of the membrane. The interval 700-723 (TNRVLLVFEAKIPTSFHRKWWGLN) is intracellular loop 2 (ICL2). A helical transmembrane segment spans residues 724–746 (LQFLLVFLCTFMQIVICAIWLNT). Residues 747-770 (APPSSYRNHELEDEIIFITCHEGS) are Extracellular-facing. Residues 771–790 (LMALGFLIGYTCLLAAICFF) traverse the membrane as a helical segment. The Cytoplasmic segment spans residues 791–806 (FAFKSRKLPENFNEAK). Residues 791-806 (FAFKSRKLPENFNEAK) form an intracellular loop 3 (ICL3) region. The chain crosses the membrane as a helical span at residues 807-829 (FITFSMLIFFIVWISFIPAYAST). The Extracellular segment spans residues 830–833 (YGKF). Residues 834-855 (VSAVEVIAILAASFGLLACIFF) form a helical membrane-spanning segment. The Cytoplasmic segment spans residues 856 to 1085 (NKVYIILFKP…STVTENMLRS (230 aa)). The segment at 856–1085 (NKVYIILFKP…STVTENMLRS (230 aa)) is C-terminus. Residues 881–901 (AFKVAARATLRRSNVSRQRSS) form an interaction with RNF19A region. Thr889 is modified (phosphothreonine). The segment at 891 to 899 (RRSNVSRQR) is arginine-rich retention motif. 3 positions are modified to phosphoserine: Ser893, Ser900, and Ser921. Over residues 893–938 (SNVSRQRSSSLGGSTGSTPSSSISSKSNSEDPFPQQQPKRQKQPQP) the composition is skewed to low complexity. Disordered stretches follow at residues 893-969 (SNVS…PPRC) and 1034-1058 (SQETGLQGPVGEDHQLEMEDPEEMS). The segment covering 950-960 (QPRPPSTPQPQ) has biased composition (pro residues). Ser1068 is subject to Phosphoserine.

Belongs to the G-protein coupled receptor 3 family. Homodimer; disulfide-linked. Interacts with VCP. Interacts with ARRB1. Phosphorylation at Thr-889 by PKC impairs coupling with G(q)/G(11) G-proteins, while it does not affect G(i)/G(o)-coupling. Phosphorylation at Ser-893 by PKC and Ser-900 by PKA promote plasma membrane localization. Post-translationally, ubiquitinated by RNF19A; which induces proteasomal degradation.

It localises to the cell membrane. Its activity is regulated as follows. In resting state, adopts an open conformation, anion-binding promoting the inactive configuration. Upon aromatic amino acid-binding, the groove in the extracellular venus flytrap module is closed, thereby inducing the formation of a novel homodimer interface between subunits. Calcium ions stabilize the active state by enhancing homodimer interactions between membrane-proximal domains to fully activate the receptor. Upon activation, the homodimer adopts an asymmetric configuration of the 7-transmembrane region that primes one protomer for G-protein coupling. G-protein binding expands the transmembrane dimer interface; the restriction imposed by the receptor dimer, in combination with intracellular loop 2 (ICL2), enables G-protein activation by facilitating conformational transition of G-protein alpha. Coupling to different classes of G-proteins results in distinct CASR-G-protein interfaces. Its function is as follows. G-protein-coupled receptor that senses changes in the extracellular concentration of calcium ions and plays a key role in maintaining calcium homeostasis. Senses fluctuations in the circulating calcium concentration: activated by elevated circulating calcium, leading to decreased parathyroid hormone (PTH) secretion in parathyroid glands. In kidneys, acts as a key regulator of renal tubular calcium resorption. Ligand binding causes a conformation change that triggers signaling via guanine nucleotide-binding proteins (G-proteins) and modulates the activity of downstream effectors. CASR is coupled with different G(q)/G(11), G(i)/G(o)- or G(s)-classes of G-proteins depending on the context. In the parathyroid and kidney, CASR signals through G(q)/G(11) and G(i)/G(o) G-proteins: G(q)/G(11) coupling activates phospholipase C-beta, releasing diacylglycerol (DAG) and inositol 1,4,5-trisphosphate (IP3) second messengers, while G(i)/G(o) coupling mediates inhibition of adenylate cyclase activity. The G-protein-coupled receptor activity is activated by a co-agonist mechanism: aromatic amino acids, such as Trp or Phe, act concertedly with divalent cations, such as calcium or magnesium, to achieve full receptor activation. Acts as an activator of the NLRP3 inflammasome via G(i)/G(o)-mediated signaling: down-regulation of cyclic AMP (cAMP) relieving NLRP3 inhibition by cAMP. Acts as a regulator of proton-sensing receptor GPR68 in a seesaw manner: CASR-mediated signaling inhibits GPR68 signaling in response to extracellular calcium, while GPR68 inhibits CASR in presence of extracellular protons. This Bos taurus (Bovine) protein is Extracellular calcium-sensing receptor (CASR).